Consider the following 202-residue polypeptide: CASP-like protein 2B1 (202 aa).

At 1–29 (MSYLGVGVSPGNVPVYHGTNLKVVDRRVR) the chain is on the cytoplasmic side. Residues 30–50 (LAELVLRCVICGLGILAAVLV) form a helical membrane-spanning segment. Residues 51 to 72 (GTDTQVKVIFTIQKKAKFTDMK) are Extracellular-facing. The chain crosses the membrane as a helical span at residues 73–93 (ALVFLVIANGIAAAYSLIQGL). At 94–109 (RCVVSMVRGSVLFSKP) the chain is on the cytoplasmic side. A helical transmembrane segment spans residues 110-130 (LAWAIFSGDQVIAYLTLAAVA). Residues 131-164 (AAAQSSVFGEFGQPELQWMKICNMYGKFCNQVGE) are Extracellular-facing. The chain crosses the membrane as a helical span at residues 165–185 (GIVSAVGVSLSMVILSGISAF). Residues 186-202 (SLFRLYGGNKGTSGGRW) lie on the Cytoplasmic side of the membrane.

Belongs to the Casparian strip membrane proteins (CASP) family. As to quaternary structure, homodimer and heterodimers.

Its subcellular location is the cell membrane. The protein is CASP-like protein 2B1 of Vitis vinifera (Grape).